We begin with the raw amino-acid sequence, 222 residues long: Endonuclease V (222 aa).

Positions 43 and 109 each coordinate Mg(2+).

This sequence belongs to the endonuclease V family. The cofactor is Mg(2+).

It localises to the cytoplasm. The catalysed reaction is Endonucleolytic cleavage at apurinic or apyrimidinic sites to products with a 5'-phosphate.. Its function is as follows. DNA repair enzyme involved in the repair of deaminated bases. Selectively cleaves double-stranded DNA at the second phosphodiester bond 3' to a deoxyinosine leaving behind the intact lesion on the nicked DNA. The protein is Endonuclease V of Roseiflexus sp. (strain RS-1).